The sequence spans 225 residues: 3-dehydroquinate dehydratase (225 aa).

3-dehydroquinate contacts are provided by residues Ser-6, Glu-30 to Arg-32, and Arg-62. His-118 functions as the Proton donor/acceptor in the catalytic mechanism. Catalysis depends on Lys-143, which acts as the Schiff-base intermediate with substrate. Residues Arg-186, Thr-205, and Gln-209 each contribute to the 3-dehydroquinate site.

The protein belongs to the type-I 3-dehydroquinase family. Homodimer.

The enzyme catalyses 3-dehydroquinate = 3-dehydroshikimate + H2O. It participates in metabolic intermediate biosynthesis; chorismate biosynthesis; chorismate from D-erythrose 4-phosphate and phosphoenolpyruvate: step 3/7. In terms of biological role, involved in the third step of the chorismate pathway, which leads to the biosynthesis of aromatic amino acids. Catalyzes the cis-dehydration of 3-dehydroquinate (DHQ) and introduces the first double bond of the aromatic ring to yield 3-dehydroshikimate. This is 3-dehydroquinate dehydratase from Streptococcus gordonii (strain Challis / ATCC 35105 / BCRC 15272 / CH1 / DL1 / V288).